The chain runs to 476 residues: Glycogen synthase (476 aa).

Position 15 (Lys-15) interacts with ADP-alpha-D-glucose.

It belongs to the glycosyltransferase 1 family. Bacterial/plant glycogen synthase subfamily.

The enzyme catalyses [(1-&gt;4)-alpha-D-glucosyl](n) + ADP-alpha-D-glucose = [(1-&gt;4)-alpha-D-glucosyl](n+1) + ADP + H(+). It participates in glycan biosynthesis; glycogen biosynthesis. Its function is as follows. Synthesizes alpha-1,4-glucan chains using ADP-glucose. The sequence is that of Glycogen synthase from Leptospira biflexa serovar Patoc (strain Patoc 1 / Ames).